The sequence spans 555 residues: Urocanate hydratase (555 aa).

Residues 52 to 53 (GG), Gln-130, 176 to 178 (GMG), Glu-196, Arg-201, 242 to 243 (NA), 263 to 267 (QTSAH), 273 to 274 (YL), and Tyr-322 contribute to the NAD(+) site. Cys-410 is a catalytic residue. Gly-492 serves as a coordination point for NAD(+).

It belongs to the urocanase family. NAD(+) is required as a cofactor.

Its subcellular location is the cytoplasm. The enzyme catalyses 4-imidazolone-5-propanoate = trans-urocanate + H2O. It functions in the pathway amino-acid degradation; L-histidine degradation into L-glutamate; N-formimidoyl-L-glutamate from L-histidine: step 2/3. Functionally, catalyzes the conversion of urocanate to 4-imidazolone-5-propionate. This chain is Urocanate hydratase, found in Shewanella baltica (strain OS185).